The sequence spans 179 residues: Small ribosomal subunit protein uS5 (179 aa).

In terms of domain architecture, S5 DRBM spans 22–85 (MIEKLVAVNR…EYARKRMANV (64 aa)).

It belongs to the universal ribosomal protein uS5 family. In terms of assembly, part of the 30S ribosomal subunit. Contacts proteins S4 and S8.

With S4 and S12 plays an important role in translational accuracy. Functionally, located at the back of the 30S subunit body where it stabilizes the conformation of the head with respect to the body. The polypeptide is Small ribosomal subunit protein uS5 (Xylella fastidiosa (strain M12)).